The following is a 200-amino-acid chain: ATP synthase subunit s, mitochondrial (200 aa).

The transit peptide at 1 to 25 directs the protein to the mitochondrion; the sequence is MMMFGKISRQLFSLKKIPWSCDSRY. The tract at residues 1–61 is N-terminal domain; sequence MMMFGKISRQ…SEWLLRCGAK (61 aa). Residue G59 participates in Mg(2+) binding. 4 LRR repeats span residues 62–87, 88–116, 117–141, and 142–173; these read VRYC…RYKI, QAID…RITL, CRCH…KSLL, and ELEI…LSDL. T93 contacts Mg(2+).

It belongs to the ATP synthase subunit s family. In terms of assembly, homotetramer. Associates with ATP synthase.

It localises to the mitochondrion. The protein localises to the mitochondrion inner membrane. Its function is as follows. Involved in regulation of mitochondrial membrane ATP synthase. Necessary for H(+) conduction of ATP synthase. Facilitates energy-driven catalysis of ATP synthesis by blocking a proton leak through an alternative proton exit pathway. In Rattus norvegicus (Rat), this protein is ATP synthase subunit s, mitochondrial.